The primary structure comprises 604 residues: Phosphomethylpyrimidine synthase (604 aa).

Substrate is bound by residues Asn218, Met247, Tyr276, His312, 332–334 (SRG), 373–376 (DGLR), and Glu412. His416 is a Zn(2+) binding site. A substrate-binding site is contributed by Tyr439. His480 contributes to the Zn(2+) binding site. [4Fe-4S] cluster contacts are provided by Cys560, Cys563, and Cys568.

Belongs to the ThiC family. Homodimer. [4Fe-4S] cluster is required as a cofactor.

It carries out the reaction 5-amino-1-(5-phospho-beta-D-ribosyl)imidazole + S-adenosyl-L-methionine = 4-amino-2-methyl-5-(phosphooxymethyl)pyrimidine + CO + 5'-deoxyadenosine + formate + L-methionine + 3 H(+). The protein operates within cofactor biosynthesis; thiamine diphosphate biosynthesis. Its function is as follows. Catalyzes the synthesis of the hydroxymethylpyrimidine phosphate (HMP-P) moiety of thiamine from aminoimidazole ribotide (AIR) in a radical S-adenosyl-L-methionine (SAM)-dependent reaction. The polypeptide is Phosphomethylpyrimidine synthase (Zymomonas mobilis subsp. mobilis (strain ATCC 31821 / ZM4 / CP4)).